Consider the following 275-residue polypeptide: N-acetyltransferase YodP (275 aa).

The N-acetyltransferase domain maps to 125 to 271; sequence FTMRKAETND…AEGLENMNIW (147 aa).

Belongs to the acetyltransferase family.

It carries out the reaction (3S)-3,6-diaminohexanoate + acetyl-CoA = (3S)-6-acetamido-3-aminohexanoate + CoA + H(+). Functionally, in vitro, is able to catalyze the acetylation of beta-lysine to N6-acetyl-beta-lysine, an archaeal osmolyte produced by methanogenic archaea. Its physiological function has not yet been elucidated. The sequence is that of N-acetyltransferase YodP (yodP) from Bacillus subtilis (strain 168).